Reading from the N-terminus, the 248-residue chain is B-box zinc finger protein 24 (248 aa).

The Zn(2+) site is built by Cys-5, Cys-8, Cys-28, His-33, Cys-57, Cys-60, Cys-80, and His-85. A B box-type 1; atypical zinc finger spans residues 5–47 (CDVCEKAPATVICCADEAALCPQCDIEIHAANKLASKHQRLHL). The segment at 57 to 99 (CDICQEKAAFIFCVEDRALLCRDCDESIHVANSRSANHQRFLA) adopts a B box-type 2; atypical zinc-finger fold. Residues 115–148 (IEKNQPEPSNNQQKANQIPAKSTSQQQQQPSSAT) are disordered. Over residues 120 to 130 (PEPSNNQQKAN) the composition is skewed to polar residues. The segment covering 131–148 (QIPAKSTSQQQQQPSSAT) has biased composition (low complexity). The Nuclear localization signal motif lies at 226–229 (KKPR). The interval 236–248 (DDDEEHFIVPDLG) is interaction with COP1.

In terms of assembly, interacts with COP1 WD40 domain. Interacts with HY5 and HYH. Interacts with RCD1 and TRP4. Post-translationally, COP1-mediated ubiquitination and subsequent proteasomal degradation of BBX24/STO occurs in the dark. In terms of tissue distribution, high expression in leaves and lower in roots and flowers.

Its subcellular location is the nucleus. Acts as a negative regulator of seedling photomorphogenesis and light-regulated inhibition of hypocotyl elongation. BBX24/STO and BBX25/STH function as transcriptional corepressors of HY5 activity, leading to the down-regulation of BBX22 expression. BBX24/STO acts additively with BBX25/STH during de-etiolation and the hypocotyl shade avoidance response. Functions as a negative regulator of photomorphogenic UV-B responses by interacting with both COP1 and HY5. May act as a transcription factor in the salt-stress response. This is B-box zinc finger protein 24 from Arabidopsis thaliana (Mouse-ear cress).